The following is an 842-amino-acid chain: Elongation factor 2 (842 aa).

Residues 17–346 form the tr-type G domain; that stretch reads TNVRNMSVIA…MIVMHLPSPV (330 aa). Residues 26–33, 158–161, and 213–215 each bind GTP; these read AHVDHGKS, NKVD, and SGL. Histidine 699 carries the post-translational modification Diphthamide.

This sequence belongs to the TRAFAC class translation factor GTPase superfamily. Classic translation factor GTPase family. EF-G/EF-2 subfamily.

It localises to the cytoplasm. It catalyses the reaction GTP + H2O = GDP + phosphate + H(+). Catalyzes the GTP-dependent ribosomal translocation step during translation elongation. During this step, the ribosome changes from the pre-translocational (PRE) to the post-translocational (POST) state as the newly formed A-site-bound peptidyl-tRNA and P-site-bound deacylated tRNA move to the P and E sites, respectively. Catalyzes the coordinated movement of the two tRNA molecules, the mRNA and conformational changes in the ribosome. This is Elongation factor 2 (EFT1) from Candida glabrata (strain ATCC 2001 / BCRC 20586 / JCM 3761 / NBRC 0622 / NRRL Y-65 / CBS 138) (Yeast).